The sequence spans 611 residues: DNA-directed RNA polymerase subunit Rpo2C (611 aa).

Zn(2+) contacts are provided by Cys547, Cys550, Cys565, and Cys568.

It belongs to the RNA polymerase beta chain family. In terms of assembly, part of the RNA polymerase complex. Zn(2+) serves as cofactor.

The protein resides in the cytoplasm. It catalyses the reaction RNA(n) + a ribonucleoside 5'-triphosphate = RNA(n+1) + diphosphate. Its function is as follows. DNA-dependent RNA polymerase (RNAP) catalyzes the transcription of DNA into RNA using the four ribonucleoside triphosphates as substrates. The Rpo2 subunit (Rpo2N and Rpo2C in this organism) is implicated in DNA promoter recognition and in nucleotide binding. This is DNA-directed RNA polymerase subunit Rpo2C from Methanococcus vannielii (strain ATCC 35089 / DSM 1224 / JCM 13029 / OCM 148 / SB).